A 491-amino-acid chain; its full sequence is GTPase Der (491 aa).

The EngA-type G 1 domain maps to 3–166 (PVIALVGRPN…AALGIFPRDD (164 aa)). Residues 9 to 16 (GRPNVGKS), 56 to 60 (DTGGI), and 118 to 121 (NKVD) contribute to the GTP site. A disordered region spans residues 164–191 (RDDEGEEGEGEAEVVAEGEEPKRVPGPS). Residues 166–181 (DEGEEGEGEAEVVAEG) are compositionally biased toward acidic residues. Positions 182–191 (EEPKRVPGPS) are enriched in basic and acidic residues. Positions 196–369 (IKIAIIGRPN…SVQAAFQSAV (174 aa)) constitute an EngA-type G 2 domain. GTP contacts are provided by residues 202-209 (GRPNVGKS), 249-253 (DTAGV), and 314-317 (NKWD). Positions 370–454 (TRWPTSRLTR…PIRIEYKGGD (85 aa)) constitute a KH-like domain. Positions 452-464 (GGDNPYEGKKNSL) are enriched in basic and acidic residues. Residues 452–491 (GGDNPYEGKKNSLTERQVNKKRRLMSHHKKAEKKRRDKKR) form a disordered region. Positions 470–491 (NKKRRLMSHHKKAEKKRRDKKR) are enriched in basic residues.

Belongs to the TRAFAC class TrmE-Era-EngA-EngB-Septin-like GTPase superfamily. EngA (Der) GTPase family. In terms of assembly, associates with the 50S ribosomal subunit.

Functionally, GTPase that plays an essential role in the late steps of ribosome biogenesis. The protein is GTPase Der of Azotobacter vinelandii (strain DJ / ATCC BAA-1303).